Here is a 290-residue protein sequence, read N- to C-terminus: Elongation factor Ts (290 aa).

The segment at 83 to 86 (TDFV) is involved in Mg(2+) ion dislocation from EF-Tu.

The protein belongs to the EF-Ts family.

It is found in the cytoplasm. In terms of biological role, associates with the EF-Tu.GDP complex and induces the exchange of GDP to GTP. It remains bound to the aminoacyl-tRNA.EF-Tu.GTP complex up to the GTP hydrolysis stage on the ribosome. In Aquifex aeolicus (strain VF5), this protein is Elongation factor Ts (tsf).